The chain runs to 111 residues: Probable 4-amino-4-deoxy-L-arabinose-phosphoundecaprenol flippase subunit ArnE (111 aa).

A run of 3 helical transmembrane segments spans residues 38–58, 61–81, and 91–111; these read LWLG…LLVL, LPVG…TLAA, and PRHW…GSAA. Residues 40 to 109 enclose the EamA domain; the sequence is LGLALICMGA…IISGIIILGS (70 aa).

This sequence belongs to the ArnE family. As to quaternary structure, heterodimer of ArnE and ArnF.

It localises to the cell inner membrane. The protein operates within bacterial outer membrane biogenesis; lipopolysaccharide biosynthesis. Its function is as follows. Translocates 4-amino-4-deoxy-L-arabinose-phosphoundecaprenol (alpha-L-Ara4N-phosphoundecaprenol) from the cytoplasmic to the periplasmic side of the inner membrane. The chain is Probable 4-amino-4-deoxy-L-arabinose-phosphoundecaprenol flippase subunit ArnE from Salmonella agona (strain SL483).